Here is a 208-residue protein sequence, read N- to C-terminus: 3-demethoxyubiquinol 3-hydroxylase (208 aa).

Glutamate 57, glutamate 87, histidine 90, glutamate 139, glutamate 171, and histidine 174 together coordinate Fe cation.

Belongs to the COQ7 family. Fe cation serves as cofactor.

Its subcellular location is the cell membrane. It catalyses the reaction a 5-methoxy-2-methyl-3-(all-trans-polyprenyl)benzene-1,4-diol + AH2 + O2 = a 3-demethylubiquinol + A + H2O. It participates in cofactor biosynthesis; ubiquinone biosynthesis. Functionally, catalyzes the hydroxylation of 2-nonaprenyl-3-methyl-6-methoxy-1,4-benzoquinol during ubiquinone biosynthesis. This Burkholderia ambifaria (strain ATCC BAA-244 / DSM 16087 / CCUG 44356 / LMG 19182 / AMMD) (Burkholderia cepacia (strain AMMD)) protein is 3-demethoxyubiquinol 3-hydroxylase.